A 173-amino-acid chain; its full sequence is Cytochrome c-type biogenesis protein CcmE (173 aa).

Residues 1–8 (MNPRRKSR) are Cytoplasmic-facing. A helical; Signal-anchor for type II membrane protein transmembrane segment spans residues 9–29 (FKLVIFVVLGIAIASGLMLYA). Residues 30–173 (LRQNIDLFYT…RDRQEKEGAK (144 aa)) are Periplasmic-facing. Histidine 131 and tyrosine 135 together coordinate heme. Residues 139–173 (ELGEKMQKVHKPMGIKAADLKGESERDRQEKEGAK) form a disordered region. Residues 156 to 173 (ADLKGESERDRQEKEGAK) are compositionally biased toward basic and acidic residues.

It belongs to the CcmE/CycJ family.

Its subcellular location is the cell inner membrane. Functionally, heme chaperone required for the biogenesis of c-type cytochromes. Transiently binds heme delivered by CcmC and transfers the heme to apo-cytochromes in a process facilitated by CcmF and CcmH. This chain is Cytochrome c-type biogenesis protein CcmE, found in Haemophilus influenzae (strain 86-028NP).